Consider the following 426-residue polypeptide: Histidine--tRNA ligase (426 aa).

It belongs to the class-II aminoacyl-tRNA synthetase family. Homodimer.

Its subcellular location is the cytoplasm. It carries out the reaction tRNA(His) + L-histidine + ATP = L-histidyl-tRNA(His) + AMP + diphosphate + H(+). The protein is Histidine--tRNA ligase of Legionella pneumophila (strain Paris).